The primary structure comprises 201 residues: Ribonuclease HII (201 aa).

The RNase H type-2 domain occupies 12-201; the sequence is DLVAGVDEVG…VRELLDVPVQ (190 aa). Residues Asp-18, Glu-19, and Asp-110 each contribute to the a divalent metal cation site.

It belongs to the RNase HII family. Mn(2+) is required as a cofactor. It depends on Mg(2+) as a cofactor.

The protein resides in the cytoplasm. It catalyses the reaction Endonucleolytic cleavage to 5'-phosphomonoester.. Functionally, endonuclease that specifically degrades the RNA of RNA-DNA hybrids. This chain is Ribonuclease HII, found in Pseudomonas aeruginosa (strain UCBPP-PA14).